We begin with the raw amino-acid sequence, 255 residues long: Polycomb group RING finger protein 5 (255 aa).

The RING-type zinc finger occupies 18 to 57 (CYICKGYLIKPTTVTECLHTFCKTCIVQHFEDSNDCPRCG). The disordered stretch occupies residues 97–132 (WKKNKPQENGQDDMSKVDKPKVDEEGDENQDDKDYH). Basic and acidic residues predominate over residues 109 to 119 (DMSKVDKPKVD).

In terms of assembly, component of a PRC1-like complex that contains PCGF5, RNF2 and UBE2D3. Interacts with RNF2; the interaction is direct. Interacts with CBX6, CBX7 and CBX8. Interacts with AUTS2; the interaction is direct. Identified in a complex that contains AUTS2, PCGF5, CSNK2B and RNF2.

The protein localises to the nucleus. Its subcellular location is the nucleoplasm. Functionally, component of a Polycomb group (PcG) multiprotein PRC1-like complex, a complex class required to maintain the transcriptionally repressive state of many genes, including Hox genes, throughout development. PcG PRC1 complex acts via chromatin remodeling and modification of histones; it mediates monoubiquitination of histone H2A 'Lys-119', rendering chromatin heritably changed in its expressibility. Within the PRC1-like complex, regulates RNF2 ubiquitin ligase activity. Plays a redundant role with PCGF3 as part of a PRC1-like complex that mediates monoubiquitination of histone H2A 'Lys-119' on the X chromosome and is required for normal silencing of one copy of the X chromosome in XX females. In Bos taurus (Bovine), this protein is Polycomb group RING finger protein 5 (PCGF5).